A 669-amino-acid polypeptide reads, in one-letter code: Phosphatidylinositol-3-phosphate phosphatase MTMR1 (669 aa).

N-acetylmethionine is present on M1. The span at 1–17 (MDRPVAAAAAASAASCE) shows a compositional bias: low complexity. Residues 1–55 (MDRPVAAAAAASAASCEGAGGPGPGPGASWRPSRVAGGASASSRHPSIETLDSPT) are disordered. 2 positions are modified to phosphoserine: S47 and S53. A GRAM domain is found at 94–165 (NKLAQMEEAP…GVISRVEKIG (72 aa)). A Myotubularin phosphatase domain is found at 230-605 (GWKVYDPVSE…SHLELWVNYY (376 aa)). The a 1,2-diacyl-sn-glycero-3-phospho-(1D-myo-inositol-3-phosphate) site is built by N355, N380, and I381. Catalysis depends on C442, which acts as the Phosphocysteine intermediate. Positions 443, 444, 445, 446, 447, 448, and 488 each coordinate a 1,2-diacyl-sn-glycero-3-phospho-(1D-myo-inositol-3-phosphate). S443 contacts phosphate. Residues G445, W446, D447, and R448 each coordinate phosphate. Positions 612–669 (MRPQMPIHQNLKELLAIKAELQKRVEDLQREMATRTISSSSERGSSPTHSATPVHTSV) are required for dimerization. Positions 644-669 (ATRTISSSSERGSSPTHSATPVHTSV) are disordered. The span at 649–661 (SSSSERGSSPTHS) shows a compositional bias: low complexity.

The protein belongs to the protein-tyrosine phosphatase family. Non-receptor class myotubularin subfamily. Homodimer. As to expression, widely expressed. Detected in skeletal muscle, heart, lung, liver and brain.

It is found in the cell membrane. Its subcellular location is the cytoplasm. It catalyses the reaction a 1,2-diacyl-sn-glycero-3-phospho-(1D-myo-inositol-3-phosphate) + H2O = a 1,2-diacyl-sn-glycero-3-phospho-(1D-myo-inositol) + phosphate. The enzyme catalyses 1,2-dioctanoyl-sn-glycero-3-phospho-(1-D-myo-inositol-3-phosphate) + H2O = 1,2-dioctanoyl-sn-glycero-3-phospho-(1D-myo-inositol) + phosphate. It carries out the reaction a 1,2-diacyl-sn-glycero-3-phospho-(1D-myo-inositol-3,5-bisphosphate) + H2O = a 1,2-diacyl-sn-glycero-3-phospho-(1D-myo-inositol-5-phosphate) + phosphate. Its function is as follows. Lipid phosphatase that specifically dephosphorylates the D-3 position of phosphatidylinositol 3-phosphate, generating phosphatidylinositol. Could also dephosphorylate phosphatidylinositol 3,5-bisphosphate to produce phosphatidylinositol 5-phosphate. The polypeptide is Phosphatidylinositol-3-phosphate phosphatase MTMR1 (Mus musculus (Mouse)).